Reading from the N-terminus, the 438-residue chain is DEAD-box ATP-dependent RNA helicase 58, chloroplastic (438 aa).

Residues 1–44 (MAAFSGCASPLSTTLRSGLAPFTLRHRLRLRRLRASAATLREVC) constitute a chloroplast transit peptide. Residues 41–69 (REVCAGRVPEHVLQRAEEVGYVVPTEVQE) carry the Q motif motif. The Helicase ATP-binding domain maps to 72 to 245 (LPVLLSGQDC…DCVQHKWTKT (174 aa)). 85–92 (AQTGSGKT) contributes to the ATP binding site. The DEAD box motif lies at 190–193 (DEVD). The region spanning 274–436 (RLHVLLSLLE…ELPVESMFAF (163 aa)) is the Helicase C-terminal domain.

Belongs to the DEAD box helicase family.

It localises to the plastid. The protein localises to the chloroplast. The enzyme catalyses ATP + H2O = ADP + phosphate + H(+). This chain is DEAD-box ATP-dependent RNA helicase 58, chloroplastic, found in Oryza sativa subsp. japonica (Rice).